A 508-amino-acid polypeptide reads, in one-letter code: Photosystem II CP47 reaction center protein (508 aa).

Transmembrane regions (helical) follow at residues Ala21 to Ser36, Ile101 to Trp115, Gly140 to Phe156, Ile203 to Ser218, Val237 to Val252, and Asn457 to Arg472.

This sequence belongs to the PsbB/PsbC family. PsbB subfamily. PSII is composed of 1 copy each of membrane proteins PsbA, PsbB, PsbC, PsbD, PsbE, PsbF, PsbH, PsbI, PsbJ, PsbK, PsbL, PsbM, PsbT, PsbX, PsbY, PsbZ, Psb30/Ycf12, at least 3 peripheral proteins of the oxygen-evolving complex and a large number of cofactors. It forms dimeric complexes. Requires Binds multiple chlorophylls. PSII binds additional chlorophylls, carotenoids and specific lipids. as cofactor.

Its subcellular location is the plastid. The protein localises to the chloroplast thylakoid membrane. One of the components of the core complex of photosystem II (PSII). It binds chlorophyll and helps catalyze the primary light-induced photochemical processes of PSII. PSII is a light-driven water:plastoquinone oxidoreductase, using light energy to abstract electrons from H(2)O, generating O(2) and a proton gradient subsequently used for ATP formation. The sequence is that of Photosystem II CP47 reaction center protein from Chaetosphaeridium globosum (Charophycean green alga).